We begin with the raw amino-acid sequence, 197 residues long: Probable proteasome subunit beta type-4 (197 aa).

Belongs to the peptidase T1B family. The 26S proteasome consists of a 20S proteasome core and two 19S regulatory subunits. The 20S proteasome core is composed of 28 subunits that are arranged in four stacked rings, resulting in a barrel-shaped structure. The two end rings are each formed by seven alpha subunits, and the two central rings are each formed by seven beta subunits. The catalytic chamber with the active sites is on the inside of the barrel.

It localises to the cytoplasm. The protein localises to the nucleus. Non-catalytic component of the proteasome which degrades poly-ubiquitinated proteins in the cytoplasm and in the nucleus. It is essential for the regulated turnover of proteins and for the removal of misfolded proteins. The proteasome is a multicatalytic proteinase complex that is characterized by its ability to cleave peptides with Arg, Phe, Tyr, Leu, and Glu adjacent to the leaving group at neutral or slightly basic pH. It has an ATP-dependent proteolytic activity. The chain is Probable proteasome subunit beta type-4 (PRE1) from Encephalitozoon cuniculi (strain GB-M1) (Microsporidian parasite).